The following is a 351-amino-acid chain: Transaldolase (351 aa).

Lys138 serves as the catalytic Schiff-base intermediate with substrate.

Belongs to the transaldolase family. Type 2 subfamily.

The protein resides in the cytoplasm. The enzyme catalyses D-sedoheptulose 7-phosphate + D-glyceraldehyde 3-phosphate = D-erythrose 4-phosphate + beta-D-fructose 6-phosphate. It participates in carbohydrate degradation; pentose phosphate pathway; D-glyceraldehyde 3-phosphate and beta-D-fructose 6-phosphate from D-ribose 5-phosphate and D-xylulose 5-phosphate (non-oxidative stage): step 2/3. Transaldolase is important for the balance of metabolites in the pentose-phosphate pathway. The sequence is that of Transaldolase from Neisseria gonorrhoeae (strain ATCC 700825 / FA 1090).